Reading from the N-terminus, the 271-residue chain is Oligodendrocyte transcription factor 1 (271 aa).

The interval 38–117 is disordered; that stretch reads YRQPPSSSSS…RKINSRERKR (80 aa). Low complexity predominate over residues 43–61; the sequence is SSSSSSTSSTSSTSSSSTT. Residues 105-164 enclose the bHLH domain; it reads QLRRKINSRERKRMQDLNLAMDALREVILPYSAAHCQGAPGRKLSKIATLLLARNYILLL.

As to expression, expressed in the brain, in oligodendrocytes. Strongly expressed in oligodendrogliomas, while expression is weak to moderate in astrocytomas. Expression in glioblastomas is highly variable.

It localises to the nucleus. In terms of biological role, promotes formation and maturation of oligodendrocytes, especially within the brain. Cooperates with OLIG2 to establish the pMN domain of the embryonic neural tube. This is Oligodendrocyte transcription factor 1 (OLIG1) from Homo sapiens (Human).